Here is a 360-residue protein sequence, read N- to C-terminus: Photosystem II protein D1 (360 aa).

3 helical membrane passes run 30–47 (YVGWFGVLMIPCLLAATT), 119–134 (HFLIGISAYMGRQWEL), and 143–157 (WICVAYSAPVSAAFA). His119 contributes to the chlorophyll a binding site. Tyr127 contributes to the pheophytin a binding site. Positions 171 and 190 each coordinate [CaMn4O5] cluster. The chain crosses the membrane as a helical span at residues 198–219 (FHMAGVAGMFGGALFSAMHGSL). Chlorophyll a is bound at residue His199. Residues His216 and 265 to 266 (SF) each bind a quinone. Fe cation is bound at residue His216. Residue His273 coordinates Fe cation. Residues 275-289 (FLASWPVICVWLTSM) traverse the membrane as a helical segment. 4 residues coordinate [CaMn4O5] cluster: His333, Glu334, Asp343, and Ala345. A propeptide spanning residues 346–360 (AAESTSVALVAPAIG) is cleaved from the precursor.

It belongs to the reaction center PufL/M/PsbA/D family. PSII is composed of 1 copy each of membrane proteins PsbA, PsbB, PsbC, PsbD, PsbE, PsbF, PsbH, PsbI, PsbJ, PsbK, PsbL, PsbM, PsbT, PsbX, PsbY, Psb30/Ycf12, peripheral proteins PsbO, CyanoQ (PsbQ), PsbU, PsbV and a large number of cofactors. It forms dimeric complexes. The D1/D2 heterodimer binds P680, chlorophylls that are the primary electron donor of PSII, and subsequent electron acceptors. It shares a non-heme iron and each subunit binds pheophytin, quinone, additional chlorophylls, carotenoids and lipids. D1 provides most of the ligands for the Mn4-Ca-O5 cluster of the oxygen-evolving complex (OEC). There is also a Cl(-1) ion associated with D1 and D2, which is required for oxygen evolution. The PSII complex binds additional chlorophylls, carotenoids and specific lipids. is required as a cofactor. Post-translationally, tyr-162 forms a radical intermediate that is referred to as redox-active TyrZ, YZ or Y-Z. C-terminally processed by CtpA; processing is essential to allow assembly of the oxygen-evolving complex and thus photosynthetic growth.

It is found in the cellular thylakoid membrane. It carries out the reaction 2 a plastoquinone + 4 hnu + 2 H2O = 2 a plastoquinol + O2. Its function is as follows. Photosystem II (PSII) is a light-driven water:plastoquinone oxidoreductase that uses light energy to abstract electrons from H(2)O, generating O(2) and a proton gradient subsequently used for ATP formation. It consists of a core antenna complex that captures photons, and an electron transfer chain that converts photonic excitation into a charge separation. The D1/D2 (PsbA/PsbD) reaction center heterodimer binds P680, the primary electron donor of PSII as well as several subsequent electron acceptors. This Prochlorococcus marinus (strain NATL1A) protein is Photosystem II protein D1.